The following is a 518-amino-acid chain: GMP synthase [glutamine-hydrolyzing] (518 aa).

A Glutamine amidotransferase type-1 domain is found at 13–203 (KIIVLDFGSQ…ALNICGCKGD (191 aa)). Cysteine 90 functions as the Nucleophile in the catalytic mechanism. Residues histidine 177 and glutamate 179 contribute to the active site. Residues 204–393 (WTMENFSEVE…LGMPDAIVWR (190 aa)) enclose the GMPS ATP-PPase domain. Residue 231 to 237 (SGGVDSS) coordinates ATP.

Homodimer.

It catalyses the reaction XMP + L-glutamine + ATP + H2O = GMP + L-glutamate + AMP + diphosphate + 2 H(+). It participates in purine metabolism; GMP biosynthesis; GMP from XMP (L-Gln route): step 1/1. In terms of biological role, catalyzes the synthesis of GMP from XMP. This chain is GMP synthase [glutamine-hydrolyzing], found in Listeria innocua serovar 6a (strain ATCC BAA-680 / CLIP 11262).